Reading from the N-terminus, the 503-residue chain is Cytosol aminopeptidase (503 aa).

Residues K269 and D274 each contribute to the Mn(2+) site. K281 is a catalytic residue. 3 residues coordinate Mn(2+): D292, D351, and E353. R355 is a catalytic residue.

It belongs to the peptidase M17 family. Mn(2+) serves as cofactor.

It localises to the cytoplasm. The enzyme catalyses Release of an N-terminal amino acid, Xaa-|-Yaa-, in which Xaa is preferably Leu, but may be other amino acids including Pro although not Arg or Lys, and Yaa may be Pro. Amino acid amides and methyl esters are also readily hydrolyzed, but rates on arylamides are exceedingly low.. It catalyses the reaction Release of an N-terminal amino acid, preferentially leucine, but not glutamic or aspartic acids.. Presumably involved in the processing and regular turnover of intracellular proteins. Catalyzes the removal of unsubstituted N-terminal amino acids from various peptides. The chain is Cytosol aminopeptidase from Vibrio cholerae serotype O1 (strain ATCC 39541 / Classical Ogawa 395 / O395).